We begin with the raw amino-acid sequence, 378 residues long: Cell death-related nuclease 6 (378 aa).

Positions 1 to 17 are cleaved as a signal peptide; sequence MIRQIILIVSLIGISNA. Asparagine 51, asparagine 92, and asparagine 111 each carry an N-linked (GlcNAc...) asparagine glycan.

This sequence belongs to the DNase II family.

Functionally, involved in apoptotic DNA degradation. The sequence is that of Cell death-related nuclease 6 (crn-6) from Caenorhabditis elegans.